We begin with the raw amino-acid sequence, 118 residues long: Protein TusC (118 aa).

Belongs to the DsrF/TusC family. Heterohexamer, formed by a dimer of trimers. The hexameric TusBCD complex contains 2 copies each of TusB, TusC and TusD. The TusBCD complex interacts with TusE.

It is found in the cytoplasm. Functionally, part of a sulfur-relay system required for 2-thiolation of 5-methylaminomethyl-2-thiouridine (mnm(5)s(2)U) at tRNA wobble positions. In Salmonella arizonae (strain ATCC BAA-731 / CDC346-86 / RSK2980), this protein is Protein TusC.